Here is a 664-residue protein sequence, read N- to C-terminus: Phosphomethylpyrimidine synthase (664 aa).

Substrate is bound by residues Asn235, Met264, Tyr293, His329, 349–351, 390–393, and Glu429; these read SRG and DGMR. His433 is a binding site for Zn(2+). Tyr456 serves as a coordination point for substrate. Zn(2+) is bound at residue His497. The [4Fe-4S] cluster site is built by Cys577, Cys580, and Cys585.

The protein belongs to the ThiC family. In terms of assembly, homodimer. It depends on [4Fe-4S] cluster as a cofactor.

It carries out the reaction 5-amino-1-(5-phospho-beta-D-ribosyl)imidazole + S-adenosyl-L-methionine = 4-amino-2-methyl-5-(phosphooxymethyl)pyrimidine + CO + 5'-deoxyadenosine + formate + L-methionine + 3 H(+). Its pathway is cofactor biosynthesis; thiamine diphosphate biosynthesis. Its function is as follows. Catalyzes the synthesis of the hydroxymethylpyrimidine phosphate (HMP-P) moiety of thiamine from aminoimidazole ribotide (AIR) in a radical S-adenosyl-L-methionine (SAM)-dependent reaction. This chain is Phosphomethylpyrimidine synthase, found in Shewanella amazonensis (strain ATCC BAA-1098 / SB2B).